Reading from the N-terminus, the 210-residue chain is Ion-translocating oxidoreductase complex subunit G (210 aa).

The chain crosses the membrane as a helical span at residues serine 9–leucine 29. The residue at position 176 (threonine 176) is an FMN phosphoryl threonine.

The protein belongs to the RnfG family. As to quaternary structure, the complex is composed of six subunits: RnfA, RnfB, RnfC, RnfD, RnfE and RnfG. Requires FMN as cofactor.

It localises to the cell inner membrane. Part of a membrane-bound complex that couples electron transfer with translocation of ions across the membrane. In Aliivibrio fischeri (strain MJ11) (Vibrio fischeri), this protein is Ion-translocating oxidoreductase complex subunit G.